The following is a 287-amino-acid chain: MERSVTAGKWLAYCRLMRIDKPIGSLLLLWPTLWALWLAGGGAPAPWTLFVFVAGVFLMRAAGCVINDYADRHFDGHVKRTASRPLPSGEVSEQSAKVLFVVLVLLAFGLVLTLNTMTIWLSVAGLGLAWVYPFMKRVSHLPQFVLGAAFGWSIPMAYAAVSESLPATCWMMFLAYICWTVAYDTQYAMVDRDDDLKIGVKSTAILFGRFDNLIIGLLQFSMLALLLILGTMTGLGMPYYISLLVAGGMFIYQQILTAGRERDACFKAFHNNKYAGMAIFIGVLFGL.

7 helical membrane-spanning segments follow: residues 23 to 40 (IGSL…WLAG), 99 to 119 (LFVV…TMTI), 141 to 161 (LPQF…YAAV), 163 to 183 (ESLP…TVAY), 213 to 233 (LIIG…GTMT), 235 to 255 (LGMP…YQQI), and 266 to 286 (FKAF…VLFG).

Belongs to the UbiA prenyltransferase family. Mg(2+) is required as a cofactor.

It is found in the cell inner membrane. It carries out the reaction all-trans-octaprenyl diphosphate + 4-hydroxybenzoate = 4-hydroxy-3-(all-trans-octaprenyl)benzoate + diphosphate. It functions in the pathway cofactor biosynthesis; ubiquinone biosynthesis. Functionally, catalyzes the prenylation of para-hydroxybenzoate (PHB) with an all-trans polyprenyl group. Mediates the second step in the final reaction sequence of ubiquinone-8 (UQ-8) biosynthesis, which is the condensation of the polyisoprenoid side chain with PHB, generating the first membrane-bound Q intermediate 3-octaprenyl-4-hydroxybenzoate. This chain is 4-hydroxybenzoate octaprenyltransferase, found in Pectobacterium carotovorum subsp. carotovorum (strain PC1).